The chain runs to 259 residues: Oxaloacetate tautomerase FMP41, mitochondrial (259 aa).

Mg(2+) contacts are provided by Glu87, Glu89, and Asp121.

The protein belongs to the FAH family. It depends on Mg(2+) as a cofactor. Mn(2+) is required as a cofactor.

Its subcellular location is the mitochondrion. The catalysed reaction is oxaloacetate = enol-oxaloacetate. Tautomerase that converts enol-oxaloacetate, a strong inhibitor of succinate dehydrogenase, to the physiological keto form of oxaloacetate. The chain is Oxaloacetate tautomerase FMP41, mitochondrial from Saccharomyces cerevisiae (strain ATCC 204508 / S288c) (Baker's yeast).